Reading from the N-terminus, the 421-residue chain is 3-phosphoshikimate 1-carboxyvinyltransferase (421 aa).

3-phosphoshikimate is bound by residues lysine 21, serine 22, and arginine 26. Position 21 (lysine 21) interacts with phosphoenolpyruvate. 2 residues coordinate phosphoenolpyruvate: glycine 93 and arginine 121. Serine 166, serine 167, glutamine 168, serine 194, aspartate 310, and lysine 337 together coordinate 3-phosphoshikimate. Glutamine 168 lines the phosphoenolpyruvate pocket. The Proton acceptor role is filled by aspartate 310. Arginine 341, arginine 382, and lysine 407 together coordinate phosphoenolpyruvate.

Belongs to the EPSP synthase family. As to quaternary structure, monomer.

The protein resides in the cytoplasm. The enzyme catalyses 3-phosphoshikimate + phosphoenolpyruvate = 5-O-(1-carboxyvinyl)-3-phosphoshikimate + phosphate. The protein operates within metabolic intermediate biosynthesis; chorismate biosynthesis. Functionally, catalyzes the transfer of the enolpyruvyl moiety of phosphoenolpyruvate (PEP) to the 5-hydroxyl of shikimate-3-phosphate (S3P) to produce enolpyruvyl shikimate-3-phosphate and inorganic phosphate. The protein is 3-phosphoshikimate 1-carboxyvinyltransferase of Methanoregula boonei (strain DSM 21154 / JCM 14090 / 6A8).